Consider the following 267-residue polypeptide: NAD kinase 2 (267 aa).

Asp-52 acts as the Proton acceptor in catalysis. Residues 52–53 (DA), 124–125 (NE), Arg-151, Asp-153, 164–169 (TAYNKS), and Ala-188 each bind NAD(+).

Belongs to the NAD kinase family. The cofactor is a divalent metal cation.

The protein localises to the cytoplasm. The enzyme catalyses NAD(+) + ATP = ADP + NADP(+) + H(+). Involved in the regulation of the intracellular balance of NAD and NADP, and is a key enzyme in the biosynthesis of NADP. Catalyzes specifically the phosphorylation on 2'-hydroxyl of the adenosine moiety of NAD to yield NADP. The chain is NAD kinase 2 from Bacillus cereus (strain ATCC 14579 / DSM 31 / CCUG 7414 / JCM 2152 / NBRC 15305 / NCIMB 9373 / NCTC 2599 / NRRL B-3711).